Consider the following 658-residue polypeptide: MSYTVKVEEARPATEKMPSAGPVYRSIYARDGLLELPEGLQSPWEFLSGSVKRSPKTPMLGRRQIKDSEAGPYVWLTYQEVHDEAIRMASAMRSRGVNPGDRCGIYGTNCPQWIVAMQACYSHAITYVPLYDTLGPNAVEFIINHGEVSIAFVQENKISAILSCLPNCSSLLKTIVSFGNITSVQKKETEALGVSCFSWEEFSQLGNLSGELPEKHRTDICTLMYTSGATGEPKGVILTNEAIMAEILSTDNMLELTDKVFSEEDVYFSYLPLAHVYDQIVENYCIYKGSAIGYWRGDIRFLMDDLQELKPTIFCGVPRVYDRIYAGIFHKVSSGGTLKKMLFQYAYNYKMANMEKGLPHGQAAPLMDKLFFDKIKQGFGGRIRLMFSGAAPLPHHVEEYLRVTSCAALSQGYGLTESCGGCLTSIANIFPMIGTVGVPMTTIEARLESVPEMGYDALSDKPRGEICLRGTTLFSGYHKREDLTKDVLVDGWFHTGDIGEWQPNGAMKIIDRKKNIFKLSQGEYVPVENIEGIYLQCPLIASIWVYGNSFESFLVAVVVPERLALENWAANRNLTDDFKSLCENPKASKYILDELNSTAKKHQLRGFEMLKAVYLEPNPFDMERDLITPTFKLKRPQLLKYYKDHVDKLYSEAKEARV.

ATP contacts are provided by residues 226–234, 411–416, Asp-497, 509–512, and Lys-632; these read TSGATGEPK, QGYGLT, and IIDR. The interval 298 to 411 is SBD1; that stretch reads DIRFLMDDLQ…RVTSCAALSQ (114 aa). The interval 412–477 is SBD2; sequence GYGLTESCGG…LRGTTLFSGY (66 aa).

It belongs to the ATP-dependent AMP-binding enzyme family. Mostly expressed in glandular trichomes (lupulin glands) after flowering, and, to a lower extent, in stems, leaves, cones and flowers.

The protein resides in the cytoplasm. Its subcellular location is the cytosol. This Humulus lupulus (European hop) protein is Probable CoA ligase CCL6.